The sequence spans 179 residues: MECIAVNDISYGREAEIWPRDYSMLARRVQFLRFNDILVRLVSNNARIITGYIAKFNPRENLILASDKPKGNKRIEVKLESLAILEELSGNDAFNLSLVPADEFNLQQYTPSRRDYFSICNKCYKQGVGIKIYMKYGQVLTGKTTGVNACQVGVRTSNGNHMQVMFDWVSRITSSDYAE.

Functionally, transcriptional repressor of the FliC phase-1 flagellin. In Salmonella abortus-equi, this protein is Repressor of phase 1 flagellin gene (fljA).